The chain runs to 281 residues: NADPH-dependent 7-cyano-7-deazaguanine reductase (281 aa).

81-83 (IES) provides a ligand contact to substrate. 83-84 (SK) is a binding site for NADPH. Cys188 functions as the Thioimide intermediate in the catalytic mechanism. The active-site Proton donor is Asp195. Substrate is bound at residue 227 to 228 (HE). Residue 256–257 (RG) coordinates NADPH.

Belongs to the GTP cyclohydrolase I family. QueF type 2 subfamily. As to quaternary structure, homodimer.

It is found in the cytoplasm. It carries out the reaction 7-aminomethyl-7-carbaguanine + 2 NADP(+) = 7-cyano-7-deazaguanine + 2 NADPH + 3 H(+). Its pathway is tRNA modification; tRNA-queuosine biosynthesis. Catalyzes the NADPH-dependent reduction of 7-cyano-7-deazaguanine (preQ0) to 7-aminomethyl-7-deazaguanine (preQ1). This Paracidovorax citrulli (strain AAC00-1) (Acidovorax citrulli) protein is NADPH-dependent 7-cyano-7-deazaguanine reductase.